A 604-amino-acid chain; its full sequence is Zinc finger protein chinmo (604 aa).

A BTB domain is found at 32 to 98 (ADVILSCDGV…MYKGEVHVSQ (67 aa)). Disordered stretches follow at residues 122 to 155 (RLAA…SGGS), 291 to 310 (CDSL…GYTH), 330 to 437 (RSPY…DEST), and 450 to 470 (NLKY…TPNT). The span at 364 to 374 (PSSSASSTAPT) shows a compositional bias: low complexity. Residues 384 to 409 (ASPQSSRYENHSPSTTAGNGNATSSL) are compositionally biased toward polar residues. Positions 425-437 (ANDDDRELMDEST) are enriched in acidic residues. The span at 461 to 470 (SNTSSTTPNT) shows a compositional bias: low complexity. 2 C2H2-type zinc fingers span residues 517–540 (LKCL…RQRH) and 545–568 (VPCP…AREH).

In terms of tissue distribution, broadly expressed in the developing larval central nervous system (at protein level). Expressed in the larval lymph gland and circulating hemocytes (at protein level). Expressed in all cell types of the adult testis stem cell niche but not detected in somatic cells of the adult ovary (at protein level). In the testis, expressed at high levels in cyst stem cells and early cyst cells and, at lower levels, in germline stem cells (at protein level).

Its subcellular location is the nucleus. Functionally, required for morphological differentiation of postmitotic neurons during postembryonic brain development. Ensures production of appropriate neuron subtypes within a lineage by preventing precocious generation of late neuronal types of that lineage. Acts as a downstream mediator of the transcriptional activator Stat92e and is required for the development of the eye-antennal disk which gives rise to the adult eye, antenna and head capsule, for transcriptional repression of the Notch receptor ligand Ser and for the self-renewal of cyst stem cells in the testis. In the adult testis, maintains the male identify of adult somatic cyst stem cells. Represses expression and alternative splicing of transformer pre-mRNA, resulting in the production of the male-specific isoform of transcription factor dsx which ensures male-specific transcription of target genes. Plays a role in actin nuclear localization through its involvement in repressing the expression of the kinase Cdi. This maintains the cofilin/actin-depolymerizing factor homolog tsr in its unphosphorylated state which is required for actin nuclear import. This Drosophila melanogaster (Fruit fly) protein is Zinc finger protein chinmo.